Here is a 206-residue protein sequence, read N- to C-terminus: Guanylate kinase (206 aa).

The Guanylate kinase-like domain maps to 3–183 (GNLYILSAPS…ALTELKSILT (181 aa)). 10-17 (APSGAGKS) serves as a coordination point for ATP.

This sequence belongs to the guanylate kinase family.

The protein localises to the cytoplasm. The catalysed reaction is GMP + ATP = GDP + ADP. In terms of biological role, essential for recycling GMP and indirectly, cGMP. The protein is Guanylate kinase of Haemophilus ducreyi (strain 35000HP / ATCC 700724).